The following is a 393-amino-acid chain: Ribonucleoside-diphosphate reductase subunit M2 (393 aa).

Phosphoserine is present on serine 18. Aspartate 142, glutamate 173, and histidine 176 together coordinate Fe cation. Residue tyrosine 180 is part of the active site. Fe cation-binding residues include glutamate 236, glutamate 270, and histidine 273.

The protein belongs to the ribonucleoside diphosphate reductase small chain family. In terms of assembly, heterodimer of a large and a small subunit. Fe cation serves as cofactor.

Its subcellular location is the cytoplasm. It catalyses the reaction a 2'-deoxyribonucleoside 5'-diphosphate + [thioredoxin]-disulfide + H2O = a ribonucleoside 5'-diphosphate + [thioredoxin]-dithiol. In terms of biological role, provides the precursors necessary for DNA synthesis. Catalyzes the biosynthesis of deoxyribonucleotides from the corresponding ribonucleotides. This Drosophila melanogaster (Fruit fly) protein is Ribonucleoside-diphosphate reductase subunit M2 (RnrS).